We begin with the raw amino-acid sequence, 206 residues long: AT-hook motif nuclear-localized protein 28 (206 aa).

Disordered stretches follow at residues 1–21 (METVGRPRGRPRGSKNKPKAP) and 160–206 (TEEE…PSPY). Residues 5 to 17 (GRPRGRPRGSKNK) constitute a DNA-binding region (a.T hook). Basic residues predominate over residues 7–18 (PRGRPRGSKNKP). In terms of domain architecture, PPC spans 27–173 (DPPMSPYILE…QRNSAEGEEE (147 aa)).

The protein localises to the nucleus. Transcription factor that specifically binds AT-rich DNA sequences related to the nuclear matrix attachment regions (MARs). The protein is AT-hook motif nuclear-localized protein 28 of Arabidopsis thaliana (Mouse-ear cress).